The sequence spans 185 residues: Lysozyme g (185 aa).

E73 is an active-site residue.

Belongs to the glycosyl hydrolase 23 family.

The catalysed reaction is Hydrolysis of (1-&gt;4)-beta-linkages between N-acetylmuramic acid and N-acetyl-D-glucosamine residues in a peptidoglycan and between N-acetyl-D-glucosamine residues in chitodextrins.. The sequence is that of Lysozyme g from Cyprinus carpio (Common carp).